The following is a 198-amino-acid chain: Na(+)-translocating NADH-quinone reductase subunit E (198 aa).

6 helical membrane-spanning segments follow: residues 11–31, 39–59, 77–97, 110–130, 140–160, and 176–196; these read SIFI…FLAV, FGLG…NNLV, FLNF…LEMV, GIFL…SFMV, IVYG…LAGI, and LGIT…FSGV.

The protein belongs to the NqrDE/RnfAE family. As to quaternary structure, composed of six subunits; NqrA, NqrB, NqrC, NqrD, NqrE and NqrF.

Its subcellular location is the cell inner membrane. It catalyses the reaction a ubiquinone + n Na(+)(in) + NADH + H(+) = a ubiquinol + n Na(+)(out) + NAD(+). Its function is as follows. NQR complex catalyzes the reduction of ubiquinone-1 to ubiquinol by two successive reactions, coupled with the transport of Na(+) ions from the cytoplasm to the periplasm. NqrA to NqrE are probably involved in the second step, the conversion of ubisemiquinone to ubiquinol. This is Na(+)-translocating NADH-quinone reductase subunit E from Vibrio campbellii (strain ATCC BAA-1116).